A 562-amino-acid chain; its full sequence is Adenylate kinase isoenzyme 5 (562 aa).

Adenylate kinase stretches follow at residues 133–316 (KIIL…MAVD) and 377–559 (KIIF…TAID). 142–147 (GSGKGT) contributes to the ATP binding site. The tract at residues 162–193 (SVGELLRKKIHSTSSNRKWSLIAKIITTGELA) is NMP 1. AMP is bound by residues Arg168, 191 to 193 (ELA), 219 to 222 (GFPR), and Gln226. Residues 256-266 (KRAEQQGRPDD) form an LID 1 region. Arg257 contributes to the ATP binding site. AMP contacts are provided by Arg263 and Arg274. ATP is bound at residue 386 to 391 (GSGKGT). Residues 406–435 (STDELLQNELSSESGRSKLIRDIMERGELV) form an NMP 2 region. AMP contacts are provided by residues Thr407, 433 to 435 (ELV), 462 to 465 (GYPR), and Gln469. Residues 499 to 509 (QRSRNSPQADD) are LID 2. An ATP-binding site is contributed by Arg500. Residue Arg517 coordinates AMP. Gly545 lines the ATP pocket.

Belongs to the adenylate kinase family. In terms of assembly, monomer.

The protein resides in the cytoplasm. It catalyses the reaction AMP + ATP = 2 ADP. The catalysed reaction is a 2'-deoxyribonucleoside 5'-diphosphate + ATP = a 2'-deoxyribonucleoside 5'-triphosphate + ADP. It carries out the reaction a ribonucleoside 5'-diphosphate + ATP = a ribonucleoside 5'-triphosphate + ADP. Functionally, nucleoside monophosphate (NMP) kinase that catalyzes the reversible transfer of the terminal phosphate group between nucleoside triphosphates and monophosphates. Active on AMP and dAMP with ATP as a donor. When GTP is used as phosphate donor, the enzyme phosphorylates AMP, CMP, and to a small extent dCMP. Also displays broad nucleoside diphosphate kinase activity. The chain is Adenylate kinase isoenzyme 5 (Ak5) from Bos taurus (Bovine).